The primary structure comprises 461 residues: V-type ATP synthase beta chain (461 aa).

Belongs to the ATPase alpha/beta chains family.

In terms of biological role, produces ATP from ADP in the presence of a proton gradient across the membrane. The V-type beta chain is a regulatory subunit. This chain is V-type ATP synthase beta chain, found in Clostridium botulinum (strain Langeland / NCTC 10281 / Type F).